Consider the following 433-residue polypeptide: 3-phosphoshikimate 1-carboxyvinyltransferase (433 aa).

3 residues coordinate 3-phosphoshikimate: Lys-23, Ser-24, and Arg-28. Lys-23 serves as a coordination point for phosphoenolpyruvate. Residues Gly-95 and Arg-123 each coordinate phosphoenolpyruvate. 3-phosphoshikimate contacts are provided by Ser-167, Gln-169, Asp-317, and Lys-344. Phosphoenolpyruvate is bound at residue Gln-169. Asp-317 serves as the catalytic Proton acceptor. Residues Arg-348 and Arg-390 each coordinate phosphoenolpyruvate.

It belongs to the EPSP synthase family. Monomer.

The protein resides in the cytoplasm. The catalysed reaction is 3-phosphoshikimate + phosphoenolpyruvate = 5-O-(1-carboxyvinyl)-3-phosphoshikimate + phosphate. It functions in the pathway metabolic intermediate biosynthesis; chorismate biosynthesis; chorismate from D-erythrose 4-phosphate and phosphoenolpyruvate: step 6/7. In terms of biological role, catalyzes the transfer of the enolpyruvyl moiety of phosphoenolpyruvate (PEP) to the 5-hydroxyl of shikimate-3-phosphate (S3P) to produce enolpyruvyl shikimate-3-phosphate and inorganic phosphate. This is 3-phosphoshikimate 1-carboxyvinyltransferase from Staphylococcus epidermidis (strain ATCC 12228 / FDA PCI 1200).